The chain runs to 357 residues: Protein RecA (357 aa).

67–74 (GPESSGKT) provides a ligand contact to ATP. Positions 332–357 (PSAMSSSSSDDENSEGNVDFETGEVF) are disordered.

Belongs to the RecA family.

The protein localises to the cytoplasm. Functionally, can catalyze the hydrolysis of ATP in the presence of single-stranded DNA, the ATP-dependent uptake of single-stranded DNA by duplex DNA, and the ATP-dependent hybridization of homologous single-stranded DNAs. It interacts with LexA causing its activation and leading to its autocatalytic cleavage. This chain is Protein RecA, found in Shewanella sp. (strain ANA-3).